Here is a 457-residue protein sequence, read N- to C-terminus: tRNA-2-methylthio-N(6)-dimethylallyladenosine synthase (457 aa).

Residues 3–120 (KKVYVKTFGC…LPQMIDQRRA (118 aa)) form the MTTase N-terminal domain. 6 residues coordinate [4Fe-4S] cluster: Cys-12, Cys-49, Cys-83, Cys-157, Cys-161, and Cys-164. The Radical SAM core domain occupies 143–377 (RVEGPSAFVS…QATIEENVAR (235 aa)). A TRAM domain is found at 380-447 (RSMVGKVERI…PHSLRGELLL (68 aa)).

Belongs to the methylthiotransferase family. MiaB subfamily. In terms of assembly, monomer. [4Fe-4S] cluster is required as a cofactor.

It is found in the cytoplasm. The catalysed reaction is N(6)-dimethylallyladenosine(37) in tRNA + (sulfur carrier)-SH + AH2 + 2 S-adenosyl-L-methionine = 2-methylsulfanyl-N(6)-dimethylallyladenosine(37) in tRNA + (sulfur carrier)-H + 5'-deoxyadenosine + L-methionine + A + S-adenosyl-L-homocysteine + 2 H(+). Its function is as follows. Catalyzes the methylthiolation of N6-(dimethylallyl)adenosine (i(6)A), leading to the formation of 2-methylthio-N6-(dimethylallyl)adenosine (ms(2)i(6)A) at position 37 in tRNAs that read codons beginning with uridine. This Burkholderia ambifaria (strain ATCC BAA-244 / DSM 16087 / CCUG 44356 / LMG 19182 / AMMD) (Burkholderia cepacia (strain AMMD)) protein is tRNA-2-methylthio-N(6)-dimethylallyladenosine synthase.